Reading from the N-terminus, the 534-residue chain is 2,3-bisphosphoglycerate-independent phosphoglycerate mutase (534 aa).

Mn(2+)-binding residues include aspartate 15 and serine 65. Residue serine 65 is the Phosphoserine intermediate of the active site. Residues histidine 126, 156-157 (RD), arginine 188, arginine 194, 261-264 (RPDR), and lysine 334 contribute to the substrate site. Mn(2+) is bound by residues aspartate 401, histidine 405, aspartate 442, histidine 443, and histidine 460.

The protein belongs to the BPG-independent phosphoglycerate mutase family. The cofactor is Mn(2+).

It is found in the plastid. The protein localises to the chloroplast. The catalysed reaction is (2R)-2-phosphoglycerate = (2R)-3-phosphoglycerate. The protein operates within carbohydrate degradation; glycolysis; pyruvate from D-glyceraldehyde 3-phosphate: step 3/5. In terms of biological role, catalyzes the interconversion of 2-phosphoglycerate and 3-phosphoglycerate. This is 2,3-bisphosphoglycerate-independent phosphoglycerate mutase from Pyropia yezoensis (Susabi-nori).